Reading from the N-terminus, the 156-residue chain is Putative HTH-type transcriptional regulator YwgB (156 aa).

The HTH rrf2-type domain occupies Lys-2–Asp-133.

The chain is Putative HTH-type transcriptional regulator YwgB (ywgB) from Bacillus subtilis (strain 168).